An 801-amino-acid chain; its full sequence is PR domain zinc finger protein 4 (801 aa).

One can recognise an SET domain in the interval 412 to 529 (KQLVLRQSIV…PENELLFYYS (118 aa)). Residues 545 to 566 (HLCNCGKECNSYTEFKAHLTSH) form a C2H2-type 1; atypical zinc finger. C2H2-type zinc fingers lie at residues 618–640 (HKCDFCSKAFSDPSNLRTHLKIH), 646–668 (YRCTLCDKSFTQKAHLESHMVIH), 674–696 (LKCDYCDKLFMRRQDLKQHVLIH), and 702–724 (IKCPKCDKLFLRTNHLKKHLNSH). The C2H2-type 6; atypical zinc-finger motif lies at 730 to 752 (YVCEKCTKAYLTKYHLTRHLKTC). A disordered region spans residues 751–782 (TCKGPTSSSSAPEEEEEDDSEEEDLADSVGTE). Acidic residues predominate over residues 762 to 776 (PEEEEEDDSEEEDLA).

This sequence belongs to the class V-like SAM-binding methyltransferase superfamily. Expressed in many tissues. Highly expressed in ovary, testis, pancreas, brain, heart and prostate.

The protein localises to the nucleus. Its function is as follows. May function as a transcription factor involved in cell differentiation. In Homo sapiens (Human), this protein is PR domain zinc finger protein 4 (PRDM4).